We begin with the raw amino-acid sequence, 1073 residues long: Serine/threonine-protein phosphatase 6 regulatory ankyrin repeat subunit C (1073 aa).

28 ANK repeats span residues 7–36 (TDQP…NINV), 40–69 (ERRT…NVNA), 73–102 (VWLT…DVNA), 106–135 (YWQT…TVNV), 139–168 (TGRT…SLST), 172–201 (KDRQ…DVMC), 205–234 (KGYT…EIDE), 238–267 (FGNT…NVNQ), 271–301 (KGFT…DVNF), 305–334 (EGKS…EIDC), 338–367 (YGNT…DTAR), 371–400 (HDMF…LYSI), 422–451 (LGRT…DLRR), 455–484 (FGRT…SINE), 488–544 (KGCT…DPSL), 548–578 (QGYT…CLED), 583–612 (IPVS…NLDV), 616–645 (KGRT…SALV), 650–679 (RKWT…RADI), 686–715 (HGQT…TADA), 719–748 (RGRT…FVLC), 752–781 (KGRT…STDP), 789–818 (SGYS…FAYL), 821–851 (NPFT…KIVN), 856–885 (KGRT…EVDT), 889–919 (LGRT…NITV), 923–952 (NKNT…DLGL), and 959–988 (ALQM…TVLA).

In terms of assembly, protein phosphatase 6 (PP6) holoenzyme is proposed to be a heterotrimeric complex formed by the catalytic subunit, a SAPS domain-containing subunit (PP6R) and an ankyrin repeat-domain containing regulatory subunit (ARS).

Putative regulatory subunit of protein phosphatase 6 (PP6) that may be involved in the recognition of phosphoprotein substrates. This chain is Serine/threonine-protein phosphatase 6 regulatory ankyrin repeat subunit C (ANKRD52), found in Gallus gallus (Chicken).